Reading from the N-terminus, the 276-residue chain is Diaminopimelate epimerase (276 aa).

Residues Asn-13, Gln-46, and Asn-66 each coordinate substrate. The active-site Proton donor is the Cys-75. Substrate contacts are provided by residues 76–77 (GN), Asn-159, Asn-192, and 210–211 (ER). Cys-219 (proton acceptor) is an active-site residue. Substrate is bound at residue 220 to 221 (GT).

This sequence belongs to the diaminopimelate epimerase family. As to quaternary structure, homodimer.

The protein resides in the cytoplasm. It carries out the reaction (2S,6S)-2,6-diaminopimelate = meso-2,6-diaminopimelate. Its pathway is amino-acid biosynthesis; L-lysine biosynthesis via DAP pathway; DL-2,6-diaminopimelate from LL-2,6-diaminopimelate: step 1/1. In terms of biological role, catalyzes the stereoinversion of LL-2,6-diaminopimelate (L,L-DAP) to meso-diaminopimelate (meso-DAP), a precursor of L-lysine and an essential component of the bacterial peptidoglycan. In Chromobacterium violaceum (strain ATCC 12472 / DSM 30191 / JCM 1249 / CCUG 213 / NBRC 12614 / NCIMB 9131 / NCTC 9757 / MK), this protein is Diaminopimelate epimerase.